Here is a 264-residue protein sequence, read N- to C-terminus: MASVSSKIFAITGGASGIGAATCHLLARRGAAALCIGDLSNENMKQLEKSIREINPETKVHCTVLDVSSSSEVDKWVKDIISTFGDLHGAANVAGIAQGAGMRQIPTLLEEDDEQWKKVFQVNLDGILYATRAQVRAMKDSSSTSPGDRSIVNVASIASMAHMPDVFAYGTSKAGCAYFTTCVAQDVIPLGIRANTVSPGITRTPMLPRFVPNAKTQEEVEETYKKEGFSVIEADDVARTIVWLLSEDSRPVFGTNINVGACMP.

Residues 1-20 form the signal peptide; the sequence is MASVSSKIFAITGGASGIGA. The NADP(+) site is built by I18, D66, R132, Y169, K173, and T204. Y169 (proton donor) is an active-site residue. The Lowers pKa of active site Tyr role is filled by K173.

This sequence belongs to the short-chain dehydrogenases/reductases (SDR) family. In terms of assembly, homotetramer.

It carries out the reaction chanoclavine-I + NAD(+) = chanoclavine-I aldehyde + NADH + H(+). It participates in alkaloid biosynthesis; ergot alkaloid biosynthesis. Chanoclavine-I dehydrogenase; part of the gene cluster that mediates the biosynthesis of fungal ergot alkaloid. DmaW catalyzes the first step of ergot alkaloid biosynthesis by condensing dimethylallyl diphosphate (DMAP) and tryptophan to form 4-dimethylallyl-L-tryptophan. The second step is catalyzed by the methyltransferase easF that methylates 4-dimethylallyl-L-tryptophan in the presence of S-adenosyl-L-methionine, resulting in the formation of 4-dimethylallyl-L-abrine. The catalase easC and the FAD-dependent oxidoreductase easE then transform 4-dimethylallyl-L-abrine to chanoclavine-I which is further oxidized by easD in the presence of NAD(+), resulting in the formation of chanoclavine-I aldehyde. Chanoclavine-I aldehyde is the precursor of ergoamides and ergopeptines in Clavicipitaceae, and clavine-type alcaloids such as fumiclavine in Trichocomaceae. However, the metabolites downstream of chanoclavine-I aldehyde in Arthrodermataceae have not been identified yet. This Arthroderma otae (strain ATCC MYA-4605 / CBS 113480) (Microsporum canis) protein is Chanoclavine-I dehydrogenase easD.